A 193-amino-acid polypeptide reads, in one-letter code: Crossover junction endodeoxyribonuclease RuvC (193 aa).

Catalysis depends on residues D7, E68, and D141. The Mg(2+) site is built by D7, E68, and D141.

This sequence belongs to the RuvC family. Homodimer which binds Holliday junction (HJ) DNA. The HJ becomes 2-fold symmetrical on binding to RuvC with unstacked arms; it has a different conformation from HJ DNA in complex with RuvA. In the full resolvosome a probable DNA-RuvA(4)-RuvB(12)-RuvC(2) complex forms which resolves the HJ. Mg(2+) serves as cofactor.

The protein localises to the cytoplasm. It carries out the reaction Endonucleolytic cleavage at a junction such as a reciprocal single-stranded crossover between two homologous DNA duplexes (Holliday junction).. Its function is as follows. The RuvA-RuvB-RuvC complex processes Holliday junction (HJ) DNA during genetic recombination and DNA repair. Endonuclease that resolves HJ intermediates. Cleaves cruciform DNA by making single-stranded nicks across the HJ at symmetrical positions within the homologous arms, yielding a 5'-phosphate and a 3'-hydroxyl group; requires a central core of homology in the junction. The consensus cleavage sequence is 5'-(A/T)TT(C/G)-3'. Cleavage occurs on the 3'-side of the TT dinucleotide at the point of strand exchange. HJ branch migration catalyzed by RuvA-RuvB allows RuvC to scan DNA until it finds its consensus sequence, where it cleaves and resolves the cruciform DNA. This is Crossover junction endodeoxyribonuclease RuvC from Bifidobacterium adolescentis (strain ATCC 15703 / DSM 20083 / NCTC 11814 / E194a).